Consider the following 782-residue polypeptide: Zinc finger Y-chromosomal protein 1 (782 aa).

2 disordered regions span residues 211–233 (ADLE…SKLD) and 360–386 (LNQD…ESKQ). The segment covering 217–229 (SEVTMNAESGTDS) has biased composition (polar residues). Positions 372–382 (PKQKSKKKKRP) match the Nuclear localization signal motif. The segment covering 373–382 (KQKSKKKKRP) has biased composition (basic residues). 13 consecutive C2H2-type zinc fingers follow at residues 403–425 (YPCM…TKNH), 434–456 (YHCT…MESH), 466–488 (TECD…KTMH), 497–520 (CKCK…LVVH), 526–548 (HICG…IRVH), 554–577 (YECQ…KSKH), 583–605 (LKCG…AVLH), 611–634 (HQCS…ISVH), 640–662 (HKCD…VATH), 668–691 (HQCR…LSAH), 697–719 (FKCK…MKTH), 725–748 (YQCE…ISIH), and 754–777 (HSCD…MRHH).

Belongs to the krueppel C2H2-type zinc-finger protein family. ZFX/ZFY subfamily.

It localises to the nucleus. Probable transcriptional activator. Binds to the consensus sequence 5'-AGGCCY-3'. This Mus musculus (Mouse) protein is Zinc finger Y-chromosomal protein 1 (Zfy1).